We begin with the raw amino-acid sequence, 160 residues long: Cyanate hydratase (160 aa).

Residues Arg-100, Glu-103, and Ser-126 contribute to the active site.

The protein belongs to the cyanase family.

It catalyses the reaction cyanate + hydrogencarbonate + 3 H(+) = NH4(+) + 2 CO2. Its function is as follows. Catalyzes the reaction of cyanate with bicarbonate to produce ammonia and carbon dioxide. This chain is Cyanate hydratase, found in Aspergillus niger (strain ATCC MYA-4892 / CBS 513.88 / FGSC A1513).